The primary structure comprises 408 residues: Protein EcsB (408 aa).

The next 9 helical transmembrane spans lie at 30 to 50 (HLVI…SKWI), 53 to 73 (IPAH…VLTS), 111 to 131 (LFPL…VTPG), 134 to 154 (LVSY…NQVM), 180 to 200 (LVLY…YVIM), 284 to 304 (YLGI…YVSA), 308 to 328 (IAAV…LPLF), 351 to 371 (YFSL…VASA), and 374 to 394 (AGLT…FVVL).

Its subcellular location is the cell membrane. Its function is as follows. Presumed to form part of an ABC-transporter, it may form a transport channel. The sequence is that of Protein EcsB (ecsB) from Bacillus subtilis (strain 168).